The chain runs to 452 residues: Interferon-induced protein 44-like (452 aa).

The TLDc domain maps to 1–159 (MEVTTRLTWN…YLECEVFRVE (159 aa)).

The protein belongs to the IFI44 family. As to quaternary structure, interacts with FKBP5; this interaction modulates IKBKB and IKBKE kinase activities.

It localises to the cytoplasm. Its function is as follows. Type I interferon-stimulated gene (ISG) that plays a critical role in antiviral and antibacterial activity. During bacterial infection, promotes macrophage differentiation and facilitates inflammatory cytokine secretion. Plays a role in the control of respiratory syncytial virus/RSV infection, reducing the ability of the virus to replicate. Exhibits a low antiviral activity against hepatitis C virus. Also acts as a feedback regulator of IFN responses by negatively regulating IKBKB and IKBKE kinase activities through interaction with FKBP5. In Homo sapiens (Human), this protein is Interferon-induced protein 44-like (IFI44L).